We begin with the raw amino-acid sequence, 252 residues long: Hydroxyacylglutathione hydrolase (252 aa).

Residues His54, His56, Asp58, His59, His111, Asp130, and His170 each coordinate Zn(2+).

The protein belongs to the metallo-beta-lactamase superfamily. Glyoxalase II family. Monomer. It depends on Zn(2+) as a cofactor.

It catalyses the reaction an S-(2-hydroxyacyl)glutathione + H2O = a 2-hydroxy carboxylate + glutathione + H(+). It participates in secondary metabolite metabolism; methylglyoxal degradation; (R)-lactate from methylglyoxal: step 2/2. Its function is as follows. Thiolesterase that catalyzes the hydrolysis of S-D-lactoyl-glutathione to form glutathione and D-lactic acid. This is Hydroxyacylglutathione hydrolase from Francisella tularensis subsp. holarctica (strain FTNF002-00 / FTA).